The following is a 481-amino-acid chain: Phosphatidylinositol 4-kinase type 2-beta (481 aa).

Residues 1–11 (MEDPSEPDRLA) show a composition bias toward basic and acidic residues. The tract at residues 1 to 82 (MEDPSEPDRL…VSRSSSAELD (82 aa)) is disordered. Phosphoserine occurs at positions 12, 17, and 45. Residues 53–64 (AGEEGEAGDEEL) are compositionally biased toward acidic residues. The PI3K/PI4K catalytic domain maps to 120–451 (GIFPERISQG…VQIPCVIVER (332 aa)). The tract at residues 126–132 (ISQGSSG) is G-loop. Residues Ser133 and Lys148 each contribute to the ATP site. An important for substrate binding region spans residues 153-155 (EPY). The interval 161-174 (KWTKYVHKVCCPCC) is important for interaction with membranes. ATP is bound by residues 257-260 (QLFV) and 271-272 (RK). The tract at residues 264 to 272 (KEAEYWLRK) is important for interaction with membranes. The segment at 301–309 (RNTDRGNDN) is catalytic loop. Residues 342–362 (AIDNGLAFPFKHPDEWRAYPF) form an activation loop region. Asp344 lines the ATP pocket. Residues 357–366 (WRAYPFHWAW) form an important for interaction with membranes region.

This sequence belongs to the PI3/PI4-kinase family. Type II PI4K subfamily. As to expression, widely expressed.

It localises to the cytoplasm. It is found in the cytosol. The protein localises to the golgi apparatus membrane. The protein resides in the endoplasmic reticulum membrane. Its subcellular location is the cell membrane. It localises to the early endosome membrane. The catalysed reaction is a 1,2-diacyl-sn-glycero-3-phospho-(1D-myo-inositol) + ATP = a 1,2-diacyl-sn-glycero-3-phospho-(1D-myo-inositol 4-phosphate) + ADP + H(+). Inhibited by phenylarsine oxide and adenosine. Activation through membrane association is stimulated by active RAC1. Functionally, together with PI4K2A and the type III PI4Ks (PIK4CA and PIK4CB) it contributes to the overall PI4-kinase activity of the cell. This contribution may be especially significant in plasma membrane, endosomal and Golgi compartments. The phosphorylation of phosphatidylinositol (PI) to PI4P is the first committed step in the generation of phosphatidylinositol 4,5-bisphosphate (PIP2), a precursor of the second messenger inositol 1,4,5-trisphosphate (InsP3). Contributes to the production of InsP3 in stimulated cells and is likely to be involved in the regulation of vesicular trafficking. This Homo sapiens (Human) protein is Phosphatidylinositol 4-kinase type 2-beta (PI4K2B).